The primary structure comprises 1506 residues: MFKPFGFAAETGSHLLTTQWLQLGNSLCLKERISIAMQVTFLAFFLIHLALKWFGVVRNRGSNDVEEDLKKQSITVKQSFSYNISLLCSVSILGTHCFILLLLFRDSVVSRCDSSVSVFSAEVSQSFSWLFVSVVVVKIRERRLVKFPWMLRSWWLCSFILSFSFDAHFITAKHEPLEFQDYADLTGLLASLFLLAVSIRGKTGFHLLESSGNTEPLLLGDQTEQNKKDSYSSSSPYGNATLFQRITFSWINPLFSLGYKRPLEKDDVPDIDVKDSARFCSHAFDQKLKTTKEKEGPGNAFFYNSVLRYVWRKAAINAVFAVVNASTAYIGPYLINDFVEFLSEKQSQSLNHGYLLALGFLTAKIVETVTQRQWIFGARQLGLRLRAALISHIYQKGLVLSSQSRQSHTSGEIINYMSVDVQRITDFIWYVNNIWMLPIQIFSAIYILQKHLGLGALAALVTTLMVMACNYPLTRLQRNYQSDIMNAKDDRMKATSEILKNMKILKLQAWDNQFLNKVKTLRKKEYDCLWKSLRLQAFTTFILWGAPSLISVVTFVTCMLMGVKLTAGAVLSALATFQMLQSPIFGLPDLLSALVQSKVSADRIASYLQQSETQKDAVEYCSKDHTELSVEIENGAFSWEPESSRPTLDDIELKVKSGMKVAVCGAVGSGKSSLLSSILGEIQKLKGTVRVSGKQAYVPQSPWILSGTIRDNILFGSMYESEKYERTVKACALIKDFELFSNGDLTEIGERGINMSGGQKQRIQIARAVYQNADIYLLDDPFSAVDAHTGRELFEDCLMGILKDKTVLYVTHQVEFLPAADLILVMQNGRVMQAGKFEELLKQNIGFEVLVGAHNEALDSILSIEKSSRNFKEGSKDDTASIAESLQTHCDSEHNISTENKKKEAKLVQDEETEKGVIGKEVYLAYLTTVKGGLLVPFIILAQSCFQMLQIASNYWMAWTAPPTAESIPKLGMGRILLVYALLAAGSSLCVLARTILVAIGGLSTAETFFSRMLCSIFRAPMSFFDSTPTGRILNRASTDQSVLDLEMAVKLGWCAFSIIQIVGTIFVMSQVAWQVCVIFIPVAVACVFYQRYYTPTARELSRMSGVERAPILHHFAESLAGATTIRAFDQRDRFISSNLVLIDSHSRPWFHVASAMEWLSFRLNLLSHFVFAFSLVLLVTLPEGVINPSIAGLGVTYGLSLNVLQATVIWNICNAENKMISVERILQYSKIPSEAPLVIDGHRPLDNWPNVGSIVFRDLQVRYAEHFPAVLKNITCEFPGGKKIGVVGRTGSGKSTLIQALFRIVEPSQGTIVIDNVDITKIGLHDLRSRLGIIPQDPALFDGTIRLNLDPLAQYTDHEIWEAIDKCQLGDVIRAKDERLDATVVENGENWSVGQRQLVCLGRVLLKKSNILVLDEATASVDSATDGVIQKIINQEFKDRTVVTIAHRIHTVIESDLVLVLSDGRIAEFDSPAKLLQREDSFFSKLIKEYSLRSNHFAGSNDLLS.

11 consecutive transmembrane segments (helical) span residues 37-57, 84-104, 116-136, 150-170, 179-199, 315-335, 350-370, 427-447, 452-472, 541-561, and 567-587; these read MQVT…FGVV, ISLL…LLLF, VSVF…SVVV, MLRS…AHFI, FQDY…AVSI, AINA…PYLI, LNHG…ETVT, FIWY…AIYI, LGLG…CNYP, FILW…CMLM, and AGAV…IFGL. The ABC transmembrane type-1 1 domain occupies 314-596; that stretch reads AAINAVFAVV…LPDLLSALVQ (283 aa). Positions 630–853 constitute an ABC transporter 1 domain; the sequence is VEIENGAFSW…NIGFEVLVGA (224 aa). Residue 665 to 672 coordinates ATP; it reads GAVGSGKS. Helical transmembrane passes span 934-956, 976-996, 1048-1068, 1167-1187, and 1191-1211; these read LLVP…SNYW, ILLV…ARTI, MAVK…TIFV, LSHF…EGVI, and IAGL…TVIW. One can recognise an ABC transmembrane type-1 2 domain in the interval 936–1218; the sequence is VPFIILAQSC…VIWNICNAEN (283 aa). The ABC transporter 2 domain maps to 1257–1489; that stretch reads FRDLQVRYAE…EDSFFSKLIK (233 aa). Residue 1289–1296 coordinates ATP; the sequence is GRTGSGKS.

This sequence belongs to the ABC transporter superfamily. ABCC family. Conjugate transporter (TC 3.A.1.208) subfamily. Ubiquitous.

It is found in the membrane. It catalyses the reaction ATP + H2O + xenobioticSide 1 = ADP + phosphate + xenobioticSide 2.. In terms of biological role, pump for glutathione S-conjugates. This is ABC transporter C family member 9 (ABCC9) from Arabidopsis thaliana (Mouse-ear cress).